The primary structure comprises 537 residues: [Pyruvate dehydrogenase [acetyl-transferring]]-phosphatase 1, mitochondrial (537 aa).

The N-terminal 71 residues, 1-71 (MPAPTQLFFP…WWQYTQGRRY (71 aa)), are a transit peptide targeting the mitochondrion. The PPM-type phosphatase domain occupies 109-525 (ILGFDSNQLP…DDITIIVVQF (417 aa)). 2 residues coordinate Mn(2+): Asp-144 and Gly-145. Lys-202 carries the post-translational modification N6-acetyllysine. Residues Asp-418 and Asp-516 each contribute to the Mn(2+) site.

It belongs to the PP2C family. Heterodimer of a catalytic (PDP1) and a regulatory (PDPR) subunit. Mn(2+) serves as cofactor. Requires Mg(2+) as cofactor.

The protein resides in the mitochondrion. It catalyses the reaction O-phospho-L-seryl-[pyruvate dehydrogenase E1 alpha subunit] + H2O = L-seryl-[pyruvate dehydrogenase E1 alpha subunit] + phosphate. Its activity is regulated as follows. Magnesium-dependent and calcium-stimulated. PDP1 activity strongly depends on its Ca(2+)-dependent binding to the lipoyl domain of E2 subunit of component of the pyruvate dehydrogenase complex. Its function is as follows. Mitochondrial enzyme that catalyzes the dephosphorylation and concomitant reactivation of the alpha subunit of the E1 component of the pyruvate dehydrogenase complex (PDC), thereby stimulating the conversion of pyruvate into acetyl-CoA. This chain is [Pyruvate dehydrogenase [acetyl-transferring]]-phosphatase 1, mitochondrial, found in Homo sapiens (Human).